A 264-amino-acid chain; its full sequence is MKKLKLHGFNNLTKSLSFCIYDICYAKTAEERDGYIAYIDELYNANRLTEILSETCSIIGANILNIARQDYEPQGASVTILVSEEPVDPKLIDQTEHPGPLPETVVAHLDKSHICVHTYPESHPEGGLCTFRADIEVSTCGVISPLKALNYLIHQLESDIVTIDYRVRGFTRDVNGMKHFIDHEINSIQNFMSEDMKSLYDMVDVNVYQENIFHTKMLLKEFDLKHYMFHTKPEDLTETERQEITAALWKEMREIYYGRNISAV.

Catalysis depends on S112, which acts as the Schiff-base intermediate with substrate; via pyruvic acid. A Pyruvic acid (Ser); by autocatalysis modification is found at S112. The active-site Proton acceptor; for processing activity is H117. C140 functions as the Proton donor; for catalytic activity in the catalytic mechanism.

This sequence belongs to the prokaryotic AdoMetDC family. Type 2 subfamily. As to quaternary structure, heterooctamer of four alpha and four beta chains arranged as a tetramer of alpha/beta heterodimers. The cofactor is pyruvate. In terms of processing, is synthesized initially as an inactive proenzyme. Formation of the active enzyme involves a self-maturation process in which the active site pyruvoyl group is generated from an internal serine residue via an autocatalytic post-translational modification. Two non-identical subunits are generated from the proenzyme in this reaction, and the pyruvate is formed at the N-terminus of the alpha chain, which is derived from the carboxyl end of the proenzyme. The post-translation cleavage follows an unusual pathway, termed non-hydrolytic serinolysis, in which the side chain hydroxyl group of the serine supplies its oxygen atom to form the C-terminus of the beta chain, while the remainder of the serine residue undergoes an oxidative deamination to produce ammonia and the pyruvoyl group blocking the N-terminus of the alpha chain.

It catalyses the reaction S-adenosyl-L-methionine + H(+) = S-adenosyl 3-(methylsulfanyl)propylamine + CO2. The protein operates within amine and polyamine biosynthesis; S-adenosylmethioninamine biosynthesis; S-adenosylmethioninamine from S-adenosyl-L-methionine: step 1/1. In terms of biological role, catalyzes the decarboxylation of S-adenosylmethionine to S-adenosylmethioninamine (dcAdoMet), the propylamine donor required for the synthesis of the polyamines spermine and spermidine from the diamine putrescine. This is S-adenosylmethionine decarboxylase proenzyme from Salmonella gallinarum (strain 287/91 / NCTC 13346).